The following is an 836-amino-acid chain: Glutamate receptor ionotropic, kainate glr-3 (836 aa).

Residues Met1–Cys19 form the signal peptide. Over Tyr20–Thr523 the chain is Extracellular. A disulfide bridge links Cys76 with Cys320. Asn225, Asn257, Asn356, Asn391, and Asn419 each carry an N-linked (GlcNAc...) asparagine glycan. L-glutamate-binding positions include Ser478–Thr480 and Arg485. A helical membrane pass occupies residues Gln524–Ala544. Residues Lys545–Gly600 are Cytoplasmic-facing. The helical transmembrane segment at Ile601–Leu621 threads the bilayer. Topologically, residues Thr622–Ser780 are extracellular. An L-glutamate-binding site is contributed by Ser651 to Thr652. A glycan (N-linked (GlcNAc...) asparagine) is linked at Asn657. Residue Glu699 coordinates L-glutamate. The helical transmembrane segment at Ile781 to Phe801 threads the bilayer. Over Glu802 to Asn836 the chain is Cytoplasmic.

Belongs to the glutamate-gated ion channel (TC 1.A.10.1) family. In terms of tissue distribution, expressed in the intestine and in the ASER neuron. Also expressed in the thermosensitive RIA interneuron.

The protein resides in the cell membrane. It localises to the postsynaptic cell membrane. Activated by low temperature of 18 degrees Celsius in ASER neuron. Ionotropic glutamate receptor. Activation by glutamate requires additional verification. L-glutamate acts as an excitatory neurotransmitter at many synapses in the central nervous system. Binding of the excitatory neurotransmitter L-glutamate induces a conformation change, leading to the opening of the cation channel, and thereby converts the chemical signal to an electrical impulse. The receptor then desensitizes rapidly and enters a transient inactive state, characterized by the presence of bound agonist. In terms of biological role, independent of its ionotropic glutamate receptor activity, acts as a thermoreceptor in the ASER neuron where it triggers a calcium response to activate cold avoidance behavior in response to temperatures below 19 degrees Celsius. Possibly functions as a metabotropic cold receptor and acts upstream of the G(o) G protein goa-1 in the ASER neuron. Also functions in cold sensing in the intestine. This Caenorhabditis elegans protein is Glutamate receptor ionotropic, kainate glr-3.